A 527-amino-acid chain; its full sequence is Peptide chain release factor 3 (527 aa).

The tr-type G domain occupies 9–277 (AKRRTFAIIS…CIVDWAPQPL (269 aa)). GTP is bound by residues 18–25 (SHPDAGKT), 86–90 (DTPGH), and 140–143 (NKLD).

The protein belongs to the TRAFAC class translation factor GTPase superfamily. Classic translation factor GTPase family. PrfC subfamily.

It is found in the cytoplasm. Functionally, increases the formation of ribosomal termination complexes and stimulates activities of RF-1 and RF-2. It binds guanine nucleotides and has strong preference for UGA stop codons. It may interact directly with the ribosome. The stimulation of RF-1 and RF-2 is significantly reduced by GTP and GDP, but not by GMP. This is Peptide chain release factor 3 from Pseudomonas aeruginosa (strain LESB58).